Reading from the N-terminus, the 87-residue chain is Large ribosomal subunit protein bL27 (87 aa).

The disordered stretch occupies residues Met-1–Arg-25. Over residues Ala-7–Gln-19 the composition is skewed to polar residues.

It belongs to the bacterial ribosomal protein bL27 family.

In Rhodococcus opacus (strain B4), this protein is Large ribosomal subunit protein bL27.